The chain runs to 552 residues: Phosphoglucomutase (552 aa).

Ser-143 serves as the catalytic Phosphoserine intermediate. Residues Ser-143, Asp-295, Asp-297, and Asp-299 each coordinate Mg(2+).

Belongs to the phosphohexose mutase family. The cofactor is Mg(2+).

It carries out the reaction alpha-D-glucose 1-phosphate = alpha-D-glucose 6-phosphate. It functions in the pathway glycolipid metabolism; diglucosyl-diacylglycerol biosynthesis. Its function is as follows. Catalyzes the interconversion between glucose-6-phosphate and alpha-glucose-1-phosphate. This is the first step in the biosynthesis of diglucosyl-diacylglycerol (Glc2-DAG), i.e. the predominant glycolipid found in the S.aureus membrane, which is also used as a membrane anchor for lipoteichoic acid (LTA). This is Phosphoglucomutase (pgcA) from Staphylococcus aureus (strain Mu50 / ATCC 700699).